The sequence spans 295 residues: Aspartate carbamoyltransferase catalytic subunit (295 aa).

Carbamoyl phosphate-binding residues include Arg49 and Thr50. Lys77 is a binding site for L-aspartate. Carbamoyl phosphate contacts are provided by Arg99, His127, and Gln130. L-aspartate-binding residues include Arg161 and Arg212. 2 residues coordinate carbamoyl phosphate: Gly251 and Pro252.

It belongs to the aspartate/ornithine carbamoyltransferase superfamily. ATCase family. As to quaternary structure, heterododecamer (2C3:3R2) of six catalytic PyrB chains organized as two trimers (C3), and six regulatory PyrI chains organized as three dimers (R2).

It carries out the reaction carbamoyl phosphate + L-aspartate = N-carbamoyl-L-aspartate + phosphate + H(+). The protein operates within pyrimidine metabolism; UMP biosynthesis via de novo pathway; (S)-dihydroorotate from bicarbonate: step 2/3. Its function is as follows. Catalyzes the condensation of carbamoyl phosphate and aspartate to form carbamoyl aspartate and inorganic phosphate, the committed step in the de novo pyrimidine nucleotide biosynthesis pathway. The chain is Aspartate carbamoyltransferase catalytic subunit from Campylobacter jejuni subsp. jejuni serotype O:23/36 (strain 81-176).